The chain runs to 199 residues: Probable GTP-binding protein EngB (199 aa).

The EngB-type G domain maps to 21 to 195; that stretch reads IYTEIAFLGR…EQKIILESLG (175 aa). GTP-binding positions include 29–36, 56–60, 81–84, 151–154, and 174–176; these read GRSNVGKS, GKTQL, DLPG, TKAD, and VSN. S36 and T58 together coordinate Mg(2+).

It belongs to the TRAFAC class TrmE-Era-EngA-EngB-Septin-like GTPase superfamily. EngB GTPase family. Mg(2+) serves as cofactor.

Its function is as follows. Necessary for normal cell division and for the maintenance of normal septation. This Campylobacter lari (strain RM2100 / D67 / ATCC BAA-1060) protein is Probable GTP-binding protein EngB.